The following is a 782-amino-acid chain: Coiled-coil alpha-helical rod protein 1 (782 aa).

Composition is skewed to basic and acidic residues over residues 62–74 (ERDV…EPGR) and 208–218 (ETRRAGEAKEL). Disordered stretches follow at residues 62–82 (ERDV…WGLE) and 185–218 (AHKE…AKEL). Coiled-coil stretches lie at residues 82–314 (EGSQ…ELTR), 344–398 (LMVQ…EVER), and 498–691 (VTDV…QQEG).

Its subcellular location is the cytoplasm. It is found in the nucleus. In terms of biological role, may be a regulator of keratinocyte proliferation or differentiation. This is Coiled-coil alpha-helical rod protein 1 (CCHCR1) from Gorilla gorilla gorilla (Western lowland gorilla).